The primary structure comprises 559 residues: NXPE family member 3 (559 aa).

The first 30 residues, 1–30 (MWINFVKLRLFCCLLAVLMVVVLVVNVTQV), serve as a signal peptide directing secretion. 3 N-linked (GlcNAc...) asparagine glycosylation sites follow: Asn-26, Asn-237, and Asn-346.

The protein belongs to the NXPE family.

It is found in the secreted. The polypeptide is NXPE family member 3 (NXPE3) (Bos taurus (Bovine)).